The primary structure comprises 610 residues: tRNA uridine 5-carboxymethylaminomethyl modification enzyme MnmG (610 aa).

14–19 (GAGHAG) contacts FAD. Residue 274-288 (GPRYCPSIEDKIVKF) participates in NAD(+) binding.

This sequence belongs to the MnmG family. In terms of assembly, homodimer. Heterotetramer of two MnmE and two MnmG subunits. The cofactor is FAD.

It localises to the cytoplasm. Its function is as follows. NAD-binding protein involved in the addition of a carboxymethylaminomethyl (cmnm) group at the wobble position (U34) of certain tRNAs, forming tRNA-cmnm(5)s(2)U34. The sequence is that of tRNA uridine 5-carboxymethylaminomethyl modification enzyme MnmG from Chlamydia trachomatis serovar D (strain ATCC VR-885 / DSM 19411 / UW-3/Cx).